A 176-amino-acid chain; its full sequence is Dual-action ribosomal maturation protein DarP (176 aa).

This sequence belongs to the DarP family.

The protein resides in the cytoplasm. Its function is as follows. Member of a network of 50S ribosomal subunit biogenesis factors which assembles along the 30S-50S interface, preventing incorrect 23S rRNA structures from forming. Promotes peptidyl transferase center (PTC) maturation. In Aliivibrio fischeri (strain MJ11) (Vibrio fischeri), this protein is Dual-action ribosomal maturation protein DarP.